A 101-amino-acid polypeptide reads, in one-letter code: Large ribosomal subunit protein uL24 (101 aa).

Belongs to the universal ribosomal protein uL24 family. In terms of assembly, part of the 50S ribosomal subunit.

Its function is as follows. One of two assembly initiator proteins, it binds directly to the 5'-end of the 23S rRNA, where it nucleates assembly of the 50S subunit. In terms of biological role, one of the proteins that surrounds the polypeptide exit tunnel on the outside of the subunit. This Streptococcus uberis (strain ATCC BAA-854 / 0140J) protein is Large ribosomal subunit protein uL24.